A 470-amino-acid polypeptide reads, in one-letter code: MHEPRKLYVKSFGCQMNVYDSHRMADTLAREGFVETQDPAEADLVILNTCHIREKAAEKVYSELGRLRKQKQEAGSDTMIAVAGCVAQAEGAEIMRRAPVVDLVVGPQSYHRLPELLAEAKAGKRVVDTEFPAEDKFDHLPAPTRAATRSRGPAAFVTVQEGCDKFCTFCVVPYTRGAEVSRPVAKIMDEAARLVDQGVREISLIGQNVNAFHGAGPDGTTWSLARLMEHMARLDGLARLRYTTSHPRDMDDDLIAAHRDLPQLMPYLHLPVQSGSDRILAAMNRKHGRDDFFAIIEKMRQARPDMALSSDFIVGFPGESEKDFEDTLDLVRRVGFASAYSFKYSPRPGTPAADHDAQVPEEVKAERLAELQRLLEASKAAFDESCRGRTFDILLEKPGRQAGQLIGRSPYLQSVVVNDPPAAIGDLLTVTITDVGPNSLAGVPAEASEPSVSQSPVSSARSRPLAAMEA.

Positions 5-122 constitute an MTTase N-terminal domain; sequence RKLYVKSFGC…LPELLAEAKA (118 aa). 6 residues coordinate [4Fe-4S] cluster: Cys-14, Cys-50, Cys-85, Cys-163, Cys-167, and Cys-170. The 235-residue stretch at 149–383 folds into the Radical SAM core domain; that stretch reads RSRGPAAFVT…LLEASKAAFD (235 aa). The TRAM domain occupies 384-446; sequence ESCRGRTFDI…PNSLAGVPAE (63 aa). The disordered stretch occupies residues 439-470; that stretch reads SLAGVPAEASEPSVSQSPVSSARSRPLAAMEA. The segment covering 444-464 has biased composition (low complexity); sequence PAEASEPSVSQSPVSSARSRP.

Belongs to the methylthiotransferase family. MiaB subfamily. As to quaternary structure, monomer. [4Fe-4S] cluster is required as a cofactor.

The protein resides in the cytoplasm. It catalyses the reaction N(6)-dimethylallyladenosine(37) in tRNA + (sulfur carrier)-SH + AH2 + 2 S-adenosyl-L-methionine = 2-methylsulfanyl-N(6)-dimethylallyladenosine(37) in tRNA + (sulfur carrier)-H + 5'-deoxyadenosine + L-methionine + A + S-adenosyl-L-homocysteine + 2 H(+). Catalyzes the methylthiolation of N6-(dimethylallyl)adenosine (i(6)A), leading to the formation of 2-methylthio-N6-(dimethylallyl)adenosine (ms(2)i(6)A) at position 37 in tRNAs that read codons beginning with uridine. The chain is tRNA-2-methylthio-N(6)-dimethylallyladenosine synthase from Xanthobacter autotrophicus (strain ATCC BAA-1158 / Py2).